A 275-amino-acid chain; its full sequence is Formamidopyrimidine-DNA glycosylase (275 aa).

Residue Pro-2 is the Schiff-base intermediate with DNA of the active site. The active-site Proton donor is the Glu-3. Lys-58 (proton donor; for beta-elimination activity) is an active-site residue. Residues His-93, Arg-111, and Arg-156 each contribute to the DNA site. Residues 241–275 form an FPG-type zinc finger; it reads FVYDRAGQPCRVCNTPIRQIVQGQRSTYFCPTCQR. The active-site Proton donor; for delta-elimination activity is the Arg-265.

This sequence belongs to the FPG family. In terms of assembly, monomer. It depends on Zn(2+) as a cofactor.

The enzyme catalyses Hydrolysis of DNA containing ring-opened 7-methylguanine residues, releasing 2,6-diamino-4-hydroxy-5-(N-methyl)formamidopyrimidine.. The catalysed reaction is 2'-deoxyribonucleotide-(2'-deoxyribose 5'-phosphate)-2'-deoxyribonucleotide-DNA = a 3'-end 2'-deoxyribonucleotide-(2,3-dehydro-2,3-deoxyribose 5'-phosphate)-DNA + a 5'-end 5'-phospho-2'-deoxyribonucleoside-DNA + H(+). Functionally, involved in base excision repair of DNA damaged by oxidation or by mutagenic agents. Acts as a DNA glycosylase that recognizes and removes damaged bases. Has a preference for oxidized purines, such as 7,8-dihydro-8-oxoguanine (8-oxoG). Has AP (apurinic/apyrimidinic) lyase activity and introduces nicks in the DNA strand. Cleaves the DNA backbone by beta-delta elimination to generate a single-strand break at the site of the removed base with both 3'- and 5'-phosphates. This is Formamidopyrimidine-DNA glycosylase from Burkholderia lata (strain ATCC 17760 / DSM 23089 / LMG 22485 / NCIMB 9086 / R18194 / 383).